The primary structure comprises 425 residues: 3-phosphoshikimate 1-carboxyvinyltransferase (425 aa).

3 residues coordinate 3-phosphoshikimate: Lys22, Ser23, and Arg27. Lys22 lines the phosphoenolpyruvate pocket. 2 residues coordinate phosphoenolpyruvate: Gly95 and Arg123. 7 residues coordinate 3-phosphoshikimate: Ser169, Ser170, Gln171, Ser197, Asp313, Asn336, and Lys340. Residue Gln171 participates in phosphoenolpyruvate binding. Residue Asp313 is the Proton acceptor of the active site. Arg344, Arg386, and Lys411 together coordinate phosphoenolpyruvate.

The protein belongs to the EPSP synthase family. As to quaternary structure, monomer.

The protein localises to the cytoplasm. It carries out the reaction 3-phosphoshikimate + phosphoenolpyruvate = 5-O-(1-carboxyvinyl)-3-phosphoshikimate + phosphate. It functions in the pathway metabolic intermediate biosynthesis; chorismate biosynthesis; chorismate from D-erythrose 4-phosphate and phosphoenolpyruvate: step 6/7. Functionally, catalyzes the transfer of the enolpyruvyl moiety of phosphoenolpyruvate (PEP) to the 5-hydroxyl of shikimate-3-phosphate (S3P) to produce enolpyruvyl shikimate-3-phosphate and inorganic phosphate. The protein is 3-phosphoshikimate 1-carboxyvinyltransferase of Pseudoalteromonas translucida (strain TAC 125).